The following is a 213-amino-acid chain: 5''-phosphoribostamycin phosphatase (213 aa).

The active-site Tele-phosphohistidine intermediate is H8. The active site involves H155.

It belongs to the histidine phosphatase superfamily.

It carries out the reaction 5''-phosphoribostamycin + H2O = ribostamycin + phosphate. It participates in antibiotic biosynthesis; butirosin biosynthesis. Its function is as follows. Catalyzes dephosphorylation of 5''-phosphoribostamycin to generate ribostamycinin the biosynthetic pathway of butirosin. In Niallia circulans (Bacillus circulans), this protein is 5''-phosphoribostamycin phosphatase (btrP).